The following is a 220-amino-acid chain: Vesicle-associated membrane protein 7 (220 aa).

Residue A2 is modified to N-acetylalanine. At 2 to 188 the chain is on the cytoplasmic side; it reads AILFAVVARG…ARAMCMKNIK (187 aa). Positions 7–110 constitute a Longin domain; that stretch reads VVARGTTILA…AMNSEFSSVL (104 aa). Positions 125–185 constitute a v-SNARE coiled-coil homology domain; the sequence is KVMETQAQVD…RNLARAMCMK (61 aa). Phosphoserine is present on residues S167 and S168. The helical; Anchor for type IV membrane protein transmembrane segment at 189–209 threads the bilayer; that stretch reads LTIIIIIVSIVFIYIIVSLLC. At 210–220 the chain is on the vesicular side; sequence GGFTWPNCVKK.

The protein belongs to the synaptobrevin family. Component of the SNARE complex composed of STX4, SNAP23 and VAMP7 that binds SYT7 during lysosomal exocytosis. Component of the SNARE complex composed of STX7, STX8, VAMP7 and VTI1B that is required for heterotypic fusion of late endosomes with lysosomes. May interact with STX17. Interacts with PICALM. Interacts with RAB21.

Its subcellular location is the cytoplasmic vesicle. It is found in the secretory vesicle membrane. The protein localises to the golgi apparatus. It localises to the trans-Golgi network membrane. The protein resides in the late endosome membrane. Its subcellular location is the lysosome membrane. It is found in the endoplasmic reticulum membrane. The protein localises to the phagosome membrane. It localises to the synapse. The protein resides in the synaptosome. Its function is as follows. Involved in the targeting and/or fusion of transport vesicles to their target membrane during transport of proteins from the early endosome to the lysosome. Required for heterotypic fusion of late endosomes with lysosomes and homotypic lysosomal fusion. Required for calcium regulated lysosomal exocytosis. Involved in the export of chylomicrons from the endoplasmic reticulum to the cis Golgi. Required for exocytosis of mediators during eosinophil and neutrophil degranulation, and target cell killing by natural killer cells. Required for focal exocytosis of late endocytic vesicles during phagosome formation. The protein is Vesicle-associated membrane protein 7 (Vamp7) of Mus musculus (Mouse).